Reading from the N-terminus, the 254-residue chain is DNA repair protein RecO (254 aa).

It belongs to the RecO family.

In terms of biological role, involved in DNA repair and RecF pathway recombination. The chain is DNA repair protein RecO from Gluconacetobacter diazotrophicus (strain ATCC 49037 / DSM 5601 / CCUG 37298 / CIP 103539 / LMG 7603 / PAl5).